The sequence spans 289 residues: MLRDLFVKKKKYAAIPSEQVRKDVPDGVMTKCPKCKKIMYTKELLKNLKVCVNCGYHHPMNAWERLDSILDEGSFREYDKEMVSLNPLEFPGYEEKLENDRKKTKLNEAVVTGEGTIDDMLVVVAVMDSRFRMGSMGSVVGEKIARAVEKAYDLQVPFIIFTASGGARMQEGILSLMQMAKTSVALKKHSNAGGLFISVMTHPTTGGVSASFASLGDYNLAEPGALIGFAGRRVIEQTVREKLPEDFQTAEFLLEHGQLDAVVHRDDMRESLRKILEVHQGGGMAVWQS.

One can recognise a CoA carboxyltransferase N-terminal domain in the interval 28–289 (VMTKCPKCKK…QGGGMAVWQS (262 aa)). Zn(2+) is bound by residues cysteine 32, cysteine 35, cysteine 51, and cysteine 54. The segment at 32–54 (CPKCKKIMYTKELLKNLKVCVNC) adopts a C4-type zinc-finger fold.

Belongs to the AccD/PCCB family. As to quaternary structure, acetyl-CoA carboxylase is a heterohexamer composed of biotin carboxyl carrier protein (AccB), biotin carboxylase (AccC) and two subunits each of ACCase subunit alpha (AccA) and ACCase subunit beta (AccD). The cofactor is Zn(2+).

It localises to the cytoplasm. The catalysed reaction is N(6)-carboxybiotinyl-L-lysyl-[protein] + acetyl-CoA = N(6)-biotinyl-L-lysyl-[protein] + malonyl-CoA. It functions in the pathway lipid metabolism; malonyl-CoA biosynthesis; malonyl-CoA from acetyl-CoA: step 1/1. In terms of biological role, component of the acetyl coenzyme A carboxylase (ACC) complex. Biotin carboxylase (BC) catalyzes the carboxylation of biotin on its carrier protein (BCCP) and then the CO(2) group is transferred by the transcarboxylase to acetyl-CoA to form malonyl-CoA. The sequence is that of Acetyl-coenzyme A carboxylase carboxyl transferase subunit beta from Bacillus mycoides (strain KBAB4) (Bacillus weihenstephanensis).